Consider the following 271-residue polypeptide: Formamidopyrimidine-DNA glycosylase (271 aa).

The active-site Schiff-base intermediate with DNA is Pro-2. The active-site Proton donor is Glu-3. The active-site Proton donor; for beta-elimination activity is the Lys-57. DNA-binding residues include His-90, Arg-109, and Lys-151. The segment at 236–270 adopts an FPG-type zinc-finger fold; the sequence is HVYGRGGETCTQCGHLLSEIKLGQRATVFCSLCQK. Arg-260 serves as the catalytic Proton donor; for delta-elimination activity.

This sequence belongs to the FPG family. In terms of assembly, monomer. Requires Zn(2+) as cofactor.

It catalyses the reaction Hydrolysis of DNA containing ring-opened 7-methylguanine residues, releasing 2,6-diamino-4-hydroxy-5-(N-methyl)formamidopyrimidine.. It carries out the reaction 2'-deoxyribonucleotide-(2'-deoxyribose 5'-phosphate)-2'-deoxyribonucleotide-DNA = a 3'-end 2'-deoxyribonucleotide-(2,3-dehydro-2,3-deoxyribose 5'-phosphate)-DNA + a 5'-end 5'-phospho-2'-deoxyribonucleoside-DNA + H(+). Its function is as follows. Involved in base excision repair of DNA damaged by oxidation or by mutagenic agents. Acts as a DNA glycosylase that recognizes and removes damaged bases. Has a preference for oxidized purines, such as 7,8-dihydro-8-oxoguanine (8-oxoG). Has AP (apurinic/apyrimidinic) lyase activity and introduces nicks in the DNA strand. Cleaves the DNA backbone by beta-delta elimination to generate a single-strand break at the site of the removed base with both 3'- and 5'-phosphates. The chain is Formamidopyrimidine-DNA glycosylase from Shewanella halifaxensis (strain HAW-EB4).